Reading from the N-terminus, the 120-residue chain is NAD(P)H-quinone oxidoreductase subunit 3, chloroplastic (120 aa).

3 helical membrane-spanning segments follow: residues 9 to 29 (IFWA…LISG), 64 to 84 (MFAL…PWAM), and 88 to 108 (VLGV…IVGS).

The protein belongs to the complex I subunit 3 family. NDH is composed of at least 16 different subunits, 5 of which are encoded in the nucleus.

The protein localises to the plastid. It localises to the chloroplast thylakoid membrane. The enzyme catalyses a plastoquinone + NADH + (n+1) H(+)(in) = a plastoquinol + NAD(+) + n H(+)(out). The catalysed reaction is a plastoquinone + NADPH + (n+1) H(+)(in) = a plastoquinol + NADP(+) + n H(+)(out). Its function is as follows. NDH shuttles electrons from NAD(P)H:plastoquinone, via FMN and iron-sulfur (Fe-S) centers, to quinones in the photosynthetic chain and possibly in a chloroplast respiratory chain. The immediate electron acceptor for the enzyme in this species is believed to be plastoquinone. Couples the redox reaction to proton translocation, and thus conserves the redox energy in a proton gradient. The chain is NAD(P)H-quinone oxidoreductase subunit 3, chloroplastic from Glycine max (Soybean).